We begin with the raw amino-acid sequence, 184 residues long: ATP synthase subunit b, chloroplastic (184 aa).

The helical transmembrane segment at 27–49 (LATNPINLSVVLGVLIFFGKGVL) threads the bilayer.

The protein belongs to the ATPase B chain family. F-type ATPases have 2 components, F(1) - the catalytic core - and F(0) - the membrane proton channel. F(1) has five subunits: alpha(3), beta(3), gamma(1), delta(1), epsilon(1). F(0) has four main subunits: a(1), b(1), b'(1) and c(10-14). The alpha and beta chains form an alternating ring which encloses part of the gamma chain. F(1) is attached to F(0) by a central stalk formed by the gamma and epsilon chains, while a peripheral stalk is formed by the delta, b and b' chains.

Its subcellular location is the plastid. The protein localises to the chloroplast thylakoid membrane. Functionally, f(1)F(0) ATP synthase produces ATP from ADP in the presence of a proton or sodium gradient. F-type ATPases consist of two structural domains, F(1) containing the extramembraneous catalytic core and F(0) containing the membrane proton channel, linked together by a central stalk and a peripheral stalk. During catalysis, ATP synthesis in the catalytic domain of F(1) is coupled via a rotary mechanism of the central stalk subunits to proton translocation. Its function is as follows. Component of the F(0) channel, it forms part of the peripheral stalk, linking F(1) to F(0). This Citrus sinensis (Sweet orange) protein is ATP synthase subunit b, chloroplastic.